The primary structure comprises 126 residues: Holo-[acyl-carrier-protein] synthase (126 aa).

Positions 9 and 59 each coordinate Mg(2+).

The protein belongs to the P-Pant transferase superfamily. AcpS family. It depends on Mg(2+) as a cofactor.

It is found in the cytoplasm. The catalysed reaction is apo-[ACP] + CoA = holo-[ACP] + adenosine 3',5'-bisphosphate + H(+). Functionally, transfers the 4'-phosphopantetheine moiety from coenzyme A to a Ser of acyl-carrier-protein. This Myxococcus xanthus (strain DK1622) protein is Holo-[acyl-carrier-protein] synthase.